The following is a 420-amino-acid chain: Proteasome-activating nucleotidase (420 aa).

Residues 1-25 (MRSHLVKPGSVYDGIEPGELGETTE) form a disordered region. The stretch at 22 to 79 (ETTESVQDRVRQLESRNSFLEEQCSQIESEKRYLENQKIKYEREIRKLQSELDRMKTS) forms a coiled coil. Residues 203-208 (GTGKTL) and H342 contribute to the ATP site. Positions 418 to 420 (MFV) are docks into pockets in the proteasome alpha-ring to cause gate opening.

The protein belongs to the AAA ATPase family. As to quaternary structure, homohexamer. The hexameric complex has a two-ring architecture resembling a top hat that caps the 20S proteasome core at one or both ends. Upon ATP-binding, the C-terminus of PAN interacts with the alpha-rings of the proteasome core by binding to the intersubunit pockets.

It localises to the cytoplasm. Its function is as follows. ATPase which is responsible for recognizing, binding, unfolding and translocation of substrate proteins into the archaeal 20S proteasome core particle. Is essential for opening the gate of the 20S proteasome via an interaction with its C-terminus, thereby allowing substrate entry and access to the site of proteolysis. Thus, the C-termini of the proteasomal ATPase function like a 'key in a lock' to induce gate opening and therefore regulate proteolysis. Unfolding activity requires energy from ATP hydrolysis, whereas ATP binding alone promotes ATPase-20S proteasome association which triggers gate opening, and supports translocation of unfolded substrates. The protein is Proteasome-activating nucleotidase of Methanosarcina mazei (strain ATCC BAA-159 / DSM 3647 / Goe1 / Go1 / JCM 11833 / OCM 88) (Methanosarcina frisia).